Here is a 287-residue protein sequence, read N- to C-terminus: Protease HtpX (287 aa).

2 helical membrane-spanning segments follow: residues 4-24 and 33-53; these read IFLL…VMSI and SGLL…SLAI. Residue His139 participates in Zn(2+) binding. Glu140 is a catalytic residue. His143 contributes to the Zn(2+) binding site. 2 helical membrane-spanning segments follow: residues 154-174 and 195-215; these read LIQG…AGII and AVVF…VAYF. Glu220 is a binding site for Zn(2+).

It belongs to the peptidase M48B family. Requires Zn(2+) as cofactor.

Its subcellular location is the cell inner membrane. This Shewanella piezotolerans (strain WP3 / JCM 13877) protein is Protease HtpX.